A 543-amino-acid polypeptide reads, in one-letter code: Sarafotoxin (543 aa).

The first 23 residues, Met1–Gly23, serve as a signal peptide directing secretion. The propeptide occupies Lys24 to Leu69. Residues Gly45 to Asn65 form a disordered region. A run of 12 repeats spans residues Gly51 to Trp90, Arg91 to Trp130, Arg131 to Trp170, Arg171 to Trp210, Arg211 to Trp250, Arg251 to Trp290, Arg291 to Trp330, Arg331 to Trp370, Arg371 to Trp410, Arg411 to Trp450, Arg451 to Trp490, and Arg491 to Trp530. A 12 X 40 AA tandem repeats region spans residues Gly51–Trp530. 2 disulfide bridges follow: Cys70-Cys84 and Cys72-Cys80. The propeptide occupies Asp92–Leu109. 2 cysteine pairs are disulfide-bonded: Cys110–Cys124 and Cys112–Cys120. The propeptide occupies Asp132–Leu149. 2 disulfide bridges follow: Cys150/Cys164 and Cys152/Cys160. Residues Asp172–Leu189 constitute a propeptide that is removed on maturation. Disulfide bonds link Cys190/Cys204 and Cys192/Cys200. The propeptide occupies Asp212–Leu229. Cystine bridges form between Cys230/Cys244 and Cys232/Cys240. The propeptide occupies Asp252–Leu269. Disulfide bonds link Cys270–Cys284 and Cys272–Cys280. Residues Asp292–Leu309 constitute a propeptide that is removed on maturation. 2 disulfides stabilise this stretch: Cys310–Cys324 and Cys312–Cys320. Residues Asp332–Leu349 constitute a propeptide that is removed on maturation. Disulfide bonds link Cys350–Cys364 and Cys352–Cys360. A propeptide spanning residues Asp372–Leu389 is cleaved from the precursor. Intrachain disulfides connect Cys390–Cys404 and Cys392–Cys400. A propeptide spanning residues Asp412–Leu429 is cleaved from the precursor. 2 disulfides stabilise this stretch: Cys430–Cys444 and Cys432–Cys440. A propeptide spanning residues Asp452–Leu469 is cleaved from the precursor. 2 disulfide bridges follow: Cys470-Cys484 and Cys472-Cys480. The propeptide occupies Asp492–Leu509. 2 disulfides stabilise this stretch: Cys510/Cys524 and Cys512/Cys520. A propeptide spanning residues Asn532–Gly543 is cleaved from the precursor.

This sequence belongs to the endothelin/sarafotoxin family. As to expression, expressed by the venom gland.

It localises to the secreted. In terms of biological role, vasoconstrictor activity. These toxins cause cardiac arrest probably as a result of coronary vasospasm. Functionally, vasoconstrictor activity. Causes cardiac arrest probably as a result of coronary vasospasm. Displays high agonistic activities towards endothelin-2 receptor (EDNRB) (displays affinity in the picomolar range) and endothelin-1 receptor (EDNRA) (lower affinities). This Atractaspis engaddensis (Israeli burrowing asp) protein is Sarafotoxin.